The primary structure comprises 496 residues: 7,8-epoxymelianol synthase CYP88A154 (496 aa).

Residues 11-31 (FNFLWLILAIFVGTYVVLFGF) traverse the membrane as a helical segment. Position 444 (cysteine 444) interacts with heme.

Belongs to the cytochrome P450 family. Heme is required as a cofactor.

It localises to the membrane. The enzyme catalyses melianol + reduced [NADPH--hemoprotein reductase] + O2 = 7,8-epoxymelianol + oxidized [NADPH--hemoprotein reductase] + H2O + H(+). The protein operates within secondary metabolite biosynthesis; terpenoid biosynthesis. Monooxygenase involved in the biosynthesis of glabretanes, limonoids and quassinoids triterpene natural products such as ailanthone, chaparrinone, glaucarubinone and amarolide, allelopathic degraded triterpene lactones inhibiting the growth of other plants, and possessing antimalarial, antifeedant, insecticidal, anti-inflammatory and anticancer activities. Catalyzes the epoxidation of melianol to produce 7,8-epoxymelianol. The sequence is that of 7,8-epoxymelianol synthase CYP88A154 from Ailanthus altissima (Tree-of-heaven).